We begin with the raw amino-acid sequence, 319 residues long: ATP-dependent 6-phosphofructokinase (319 aa).

Gly11 contributes to the ATP binding site. 21 to 25 (RAVVR) lines the ADP pocket. ATP contacts are provided by residues 72-73 (RC) and 102-105 (GDGS). Asp103 provides a ligand contact to Mg(2+). 125–127 (TID) provides a ligand contact to substrate. Catalysis depends on Asp127, which acts as the Proton acceptor. Arg154 serves as a coordination point for ADP. Residues Arg162 and 169–171 (MGR) each bind substrate. Residues 185-187 (GAE), Arg211, and 213-215 (KKH) each bind ADP. Residues Glu222, Arg243, and 249–252 (HVQR) contribute to the substrate site.

Belongs to the phosphofructokinase type A (PFKA) family. ATP-dependent PFK group I subfamily. Prokaryotic clade 'B1' sub-subfamily. In terms of assembly, homotetramer. Requires Mg(2+) as cofactor.

It is found in the cytoplasm. The enzyme catalyses beta-D-fructose 6-phosphate + ATP = beta-D-fructose 1,6-bisphosphate + ADP + H(+). It participates in carbohydrate degradation; glycolysis; D-glyceraldehyde 3-phosphate and glycerone phosphate from D-glucose: step 3/4. With respect to regulation, allosterically activated by ADP and other diphosphonucleosides, and allosterically inhibited by phosphoenolpyruvate. Catalyzes the phosphorylation of D-fructose 6-phosphate to fructose 1,6-bisphosphate by ATP, the first committing step of glycolysis. The chain is ATP-dependent 6-phosphofructokinase from Geobacillus kaustophilus (strain HTA426).